The chain runs to 436 residues: GTPase Obg (436 aa).

Residues 2 to 160 (SMFLDTAKVS…RELALELKIL (159 aa)) enclose the Obg domain. In terms of domain architecture, OBG-type G spans 161 to 338 (ADVGLVGFPS…LLDATAQLLA (178 aa)). GTP contacts are provided by residues 167–174 (GFPSVGKS), 192–196 (FTTIV), 214–217 (DLPG), 284–287 (NKMD), and 319–321 (SGI). Positions 174 and 194 each coordinate Mg(2+). Residues 358–436 (GFEEEEKAFD…IGKFEFEFVD (79 aa)) enclose the OCT domain.

The protein belongs to the TRAFAC class OBG-HflX-like GTPase superfamily. OBG GTPase family. In terms of assembly, monomer. It depends on Mg(2+) as a cofactor.

It is found in the cytoplasm. Its function is as follows. An essential GTPase which binds GTP, GDP and possibly (p)ppGpp with moderate affinity, with high nucleotide exchange rates and a fairly low GTP hydrolysis rate. Plays a role in control of the cell cycle, stress response, ribosome biogenesis and in those bacteria that undergo differentiation, in morphogenesis control. The protein is GTPase Obg of Streptococcus mutans serotype c (strain ATCC 700610 / UA159).